The following is a 364-amino-acid chain: Aminomethyltransferase (364 aa).

Belongs to the GcvT family. As to quaternary structure, the glycine cleavage system is composed of four proteins: P, T, L and H.

It catalyses the reaction N(6)-[(R)-S(8)-aminomethyldihydrolipoyl]-L-lysyl-[protein] + (6S)-5,6,7,8-tetrahydrofolate = N(6)-[(R)-dihydrolipoyl]-L-lysyl-[protein] + (6R)-5,10-methylene-5,6,7,8-tetrahydrofolate + NH4(+). In terms of biological role, the glycine cleavage system catalyzes the degradation of glycine. This chain is Aminomethyltransferase, found in Shigella dysenteriae serotype 1 (strain Sd197).